Consider the following 275-residue polypeptide: Formamidopyrimidine-DNA glycosylase (275 aa).

Proline 2 serves as the catalytic Schiff-base intermediate with DNA. Glutamate 3 functions as the Proton donor in the catalytic mechanism. Catalysis depends on lysine 58, which acts as the Proton donor; for beta-elimination activity. DNA-binding residues include histidine 91, arginine 109, and arginine 154. The FPG-type zinc finger occupies 240 to 274 (AVYERAGLPCRVCGTPIRRLVQGQRATYFCPSCQK). Residue arginine 264 is the Proton donor; for delta-elimination activity of the active site.

It belongs to the FPG family. As to quaternary structure, monomer. The cofactor is Zn(2+).

It catalyses the reaction Hydrolysis of DNA containing ring-opened 7-methylguanine residues, releasing 2,6-diamino-4-hydroxy-5-(N-methyl)formamidopyrimidine.. The enzyme catalyses 2'-deoxyribonucleotide-(2'-deoxyribose 5'-phosphate)-2'-deoxyribonucleotide-DNA = a 3'-end 2'-deoxyribonucleotide-(2,3-dehydro-2,3-deoxyribose 5'-phosphate)-DNA + a 5'-end 5'-phospho-2'-deoxyribonucleoside-DNA + H(+). In terms of biological role, involved in base excision repair of DNA damaged by oxidation or by mutagenic agents. Acts as a DNA glycosylase that recognizes and removes damaged bases. Has a preference for oxidized purines, such as 7,8-dihydro-8-oxoguanine (8-oxoG). Has AP (apurinic/apyrimidinic) lyase activity and introduces nicks in the DNA strand. Cleaves the DNA backbone by beta-delta elimination to generate a single-strand break at the site of the removed base with both 3'- and 5'-phosphates. The polypeptide is Formamidopyrimidine-DNA glycosylase (Bordetella pertussis (strain Tohama I / ATCC BAA-589 / NCTC 13251)).